Here is a 423-residue protein sequence, read N- to C-terminus: MKDGAHHRPVRRTISLVLAGGRGSRLQDLTENCAKPAVHFGGKFRIIDFVLSNCVNSGLHRIGVLTQYKSHSLLRHLQHGWSFLRNEVNEFIDLLPAQQRVDEASWYRGTADAVYQNIDILREHDPKYILVLAGDHVYKMNYASLIEDHVALGAPCTVACIEVPLAEASAFGVMTVDAMRHITRFDEKPAHPQPMLDQPEQALVSMGVYVFDADYLFAALQTDIEDAASHHDFGKDLIPAIVSRGEAMAHPFDLSCVKSSPESPSYWRDVGTVDAYWAANIDLTATIPQLDLYDKDWPIWTYQPTSPPAKFVFDDEGRRGMAVDSLVSGGCIVSGALVRRSVLFTGVHLHSYSSVEESVLLPEADVGRHCRLRKVVVDEGCRIPAGMTIGFDAEDDARRFHVSADGVVLVTVAMLEALRVSQA.

Residues tyrosine 107, glycine 172, 187 to 188 (EK), and serine 205 contribute to the alpha-D-glucose 1-phosphate site.

This sequence belongs to the bacterial/plant glucose-1-phosphate adenylyltransferase family. In terms of assembly, homotetramer.

It catalyses the reaction alpha-D-glucose 1-phosphate + ATP + H(+) = ADP-alpha-D-glucose + diphosphate. The protein operates within glycan biosynthesis; glycogen biosynthesis. In terms of biological role, involved in the biosynthesis of ADP-glucose, a building block required for the elongation reactions to produce glycogen. Catalyzes the reaction between ATP and alpha-D-glucose 1-phosphate (G1P) to produce pyrophosphate and ADP-Glc. The sequence is that of Glucose-1-phosphate adenylyltransferase from Albidiferax ferrireducens (strain ATCC BAA-621 / DSM 15236 / T118) (Rhodoferax ferrireducens).